Here is a 236-residue protein sequence, read N- to C-terminus: Reticulon-3 (236 aa).

Low complexity predominate over residues 1–24; it reads MAEPSAATQSPSISSSSSGAEPSA. A disordered region spans residues 1-31; sequence MAEPSAATQSPSISSSSSGAEPSAPGGGGSP. Ala2 carries the post-translational modification N-acetylalanine. Over 2–67 the chain is Cytoplasmic; that stretch reads AEPSAATQSP…KKTGFVFGTT (66 aa). Ser30 carries the phosphoserine modification. The Reticulon domain occupies 48–236; that stretch reads VHDLIFWRDV…LPGIAKKKAE (189 aa). The segment at residues 68–91 is an intramembrane region (helical); the sequence is LIMLLSLAAFSVISVVSYLILALL. The Cytoplasmic portion of the chain corresponds to 92–151; sequence SVTISFRIYKSVIQAVQKSEEGHPFKAYLDVDITLSSEAFHNYMNAAMVHINRALKLIIR. An intramembrane region (helical) is located at residues 152 to 172; sequence LFLVEDLVDSLKLAVFMWLMT. The Cytoplasmic segment spans residues 173–176; that stretch reads YVGA. Positions 177–197 form an intramembrane region, helical; sequence VFNGITLLILAELLIFSVPIV. The tract at residues 191–236 is interaction with FADD; sequence IFSVPIVYEKYKTQIDHYVGIARDQTKSIVEKIQAKLPGIAKKKAE. Over 198–236 the chain is Cytoplasmic; the sequence is YEKYKTQIDHYVGIARDQTKSIVEKIQAKLPGIAKKKAE. An interaction with BACE1 region spans residues 204–206; the sequence is QID.

In terms of assembly, homodimer. Interacts with RTN4. Interacts with BACE1, BACE2, BCL2 and FADD. Interacts with ATL1 and ATL2. Interacts with TMEM33. Interacts with ZFYVE27 and with KIF5A in a ZFYVE27-dependent manner. Interacts with RIGI. Interacts with TRIM25.

It is found in the endoplasmic reticulum membrane. It localises to the golgi apparatus membrane. In terms of biological role, may be involved in membrane trafficking in the early secretory pathway. Inhibits BACE1 activity and amyloid precursor protein processing. May induce caspase-8 cascade and apoptosis. May favor BCL2 translocation to the mitochondria upon endoplasmic reticulum stress. Induces the formation of endoplasmic reticulum tubules. Acts also as an inflammation-resolving regulator by interacting with both TRIM25 and RIGI, subsequently impairing RIGI 'Lys-63'-linked polyubiquitination leading to IRF3 and NF-kappa-B inhibition. In Pongo abelii (Sumatran orangutan), this protein is Reticulon-3 (RTN3).